Consider the following 311-residue polypeptide: Bifunctional protein FolD (311 aa).

NADP(+) is bound by residues 184–186, Ile-209, and Ile-250; that span reads GAS.

Belongs to the tetrahydrofolate dehydrogenase/cyclohydrolase family. As to quaternary structure, homodimer.

The catalysed reaction is (6R)-5,10-methylene-5,6,7,8-tetrahydrofolate + NADP(+) = (6R)-5,10-methenyltetrahydrofolate + NADPH. It carries out the reaction (6R)-5,10-methenyltetrahydrofolate + H2O = (6R)-10-formyltetrahydrofolate + H(+). It participates in one-carbon metabolism; tetrahydrofolate interconversion. Functionally, catalyzes the oxidation of 5,10-methylenetetrahydrofolate to 5,10-methenyltetrahydrofolate and then the hydrolysis of 5,10-methenyltetrahydrofolate to 10-formyltetrahydrofolate. The chain is Bifunctional protein FolD from Gluconacetobacter diazotrophicus (strain ATCC 49037 / DSM 5601 / CCUG 37298 / CIP 103539 / LMG 7603 / PAl5).